A 71-amino-acid chain; its full sequence is Small ribosomal subunit protein bS21 (71 aa).

Residues 43–71 form a disordered region; sequence TERKRAKASAVKRHAKKLARENARRTRLY. A compositionally biased stretch (basic residues) spans 46–59; that stretch reads KRAKASAVKRHAKK. Over residues 60-71 the composition is skewed to basic and acidic residues; sequence LARENARRTRLY.

This sequence belongs to the bacterial ribosomal protein bS21 family.

This is Small ribosomal subunit protein bS21 from Edwardsiella ictaluri (strain 93-146).